Reading from the N-terminus, the 405-residue chain is MAASGKTSKSEPNHVIFKKISRDKSVTIYLGNRDYIDHVSQVQPVDGVVLVDPDLVKGKKVYVTLTCAFRYGQEDIDVIGLTFRRDLYFSRVQVYPPVGAASTPTKLQESLLKKLGSNTYPFLLTFPDYLPCSVMLQPAPQDSGKSCGVDFEVKAFATDSTDAEEDKIPKKSSVRLLIRKVQHAPLEMGPQPRAEAAWQFFMSDKPLHLAVSLNKEIYFHGEPIPVTVTVTNNTEKTVKKIKAFVEQVANVVLYSSDYYVKPVAMEEAQEKVPPNSTLTKTLTLLPLLANNRERRGIALDGKIKHEDTNLASSTIIKEGIDRTVLGILVSYQIKVKLTVSGFLGELTSSEVATEVPFRLMHPQPEDPAKESYQDANLVFEEFARHNLKDAGEAEEGKRDKNDVDE.

Thr234 bears the Phosphothreonine mark.

It belongs to the arrestin family. As to quaternary structure, monomer. Homodimer. Homotetramer. Interacts with RHO (via the phosphorylated C-terminus). Detected in retina, in the proximal portion of the outer segment of rod photoreceptor cells (at protein level).

It localises to the cell projection. Its subcellular location is the cilium. It is found in the photoreceptor outer segment. The protein resides in the membrane. Functionally, binds to photoactivated, phosphorylated RHO and terminates RHO signaling via G-proteins by competing with G-proteins for the same binding site on RHO. May play a role in preventing light-dependent degeneration of retinal photoreceptor cells. In Homo sapiens (Human), this protein is S-arrestin (SAG).